The chain runs to 202 residues: Small ribosomal subunit protein uS4 (202 aa).

The segment at 22-43 (TRKSARRAYPPGQHGQNRKKRS) is disordered. The 63-residue stretch at 90 to 152 (MRLDNTVFRL…AQSRKLVEAN (63 aa)) folds into the S4 RNA-binding domain.

It belongs to the universal ribosomal protein uS4 family. As to quaternary structure, part of the 30S ribosomal subunit. Contacts protein S5. The interaction surface between S4 and S5 is involved in control of translational fidelity.

One of the primary rRNA binding proteins, it binds directly to 16S rRNA where it nucleates assembly of the body of the 30S subunit. Functionally, with S5 and S12 plays an important role in translational accuracy. This chain is Small ribosomal subunit protein uS4, found in Nostoc punctiforme (strain ATCC 29133 / PCC 73102).